We begin with the raw amino-acid sequence, 158 residues long: NAD(P)H-quinone oxidoreductase subunit J, chloroplastic (158 aa).

Belongs to the complex I 30 kDa subunit family. In terms of assembly, NDH is composed of at least 16 different subunits, 5 of which are encoded in the nucleus.

It is found in the plastid. The protein localises to the chloroplast thylakoid membrane. The enzyme catalyses a plastoquinone + NADH + (n+1) H(+)(in) = a plastoquinol + NAD(+) + n H(+)(out). It carries out the reaction a plastoquinone + NADPH + (n+1) H(+)(in) = a plastoquinol + NADP(+) + n H(+)(out). Its function is as follows. NDH shuttles electrons from NAD(P)H:plastoquinone, via FMN and iron-sulfur (Fe-S) centers, to quinones in the photosynthetic chain and possibly in a chloroplast respiratory chain. The immediate electron acceptor for the enzyme in this species is believed to be plastoquinone. Couples the redox reaction to proton translocation, and thus conserves the redox energy in a proton gradient. In Illicium oligandrum (Star anise), this protein is NAD(P)H-quinone oxidoreductase subunit J, chloroplastic.